Consider the following 205-residue polypeptide: Coenzyme Q-binding protein COQ10, mitochondrial (205 aa).

Belongs to the COQ10 family. In terms of assembly, interacts with coenzyme Q.

It localises to the mitochondrion inner membrane. Required for the function of coenzyme Q in the respiratory chain. May serve as a chaperone or may be involved in the transport of Q6 from its site of synthesis to the catalytic sites of the respiratory complexes. This Dictyostelium discoideum (Social amoeba) protein is Coenzyme Q-binding protein COQ10, mitochondrial (coq10-1).